A 973-amino-acid polypeptide reads, in one-letter code: FHF complex subunit HOOK-interacting protein 1B (973 aa).

3 disordered regions span residues serine 466 to valine 493, serine 510 to leucine 547, and serine 573 to lysine 647. The residue at position 467 (serine 467) is a Phosphoserine. Residues serine 482–valine 493 show a composition bias toward low complexity. 4 positions are modified to phosphoserine: serine 510, serine 523, serine 529, and serine 533. Composition is skewed to low complexity over residues serine 529 to proline 538 and glycine 622 to proline 639. Residues serine 859 and serine 898 each carry the phosphoserine modification.

This sequence belongs to the FHIP family. As to quaternary structure, component of the FTS/Hook/FHIP complex (FHF complex), composed of AKTIP/FTS, FHIP1B, and one or more members of the Hook family of proteins HOOK1, HOOK2, and HOOK3. The FHF complex associates with the homotypic vesicular sorting complex (the HOPS complex).

In terms of biological role, component of the FTS/Hook/FHIP complex (FHF complex). The FHF complex may function to promote vesicle trafficking and/or fusion via the homotypic vesicular protein sorting complex (the HOPS complex). FHF complex promotes the distribution of AP-4 complex to the perinuclear area of the cell. This is FHF complex subunit HOOK-interacting protein 1B (FHIP1B) from Bos taurus (Bovine).